Here is a 298-residue protein sequence, read N- to C-terminus: Inosose dehydratase (298 aa).

This sequence belongs to the IolE/MocC family. Glutathione serves as cofactor. The cofactor is Co(2+). It depends on Mn(2+) as a cofactor.

The catalysed reaction is scyllo-inosose = 3D-3,5/4-trihydroxycyclohexane-1,2-dione + H2O. It participates in polyol metabolism; myo-inositol degradation into acetyl-CoA; acetyl-CoA from myo-inositol: step 2/7. Catalyzes the dehydration of inosose (2-keto-myo-inositol, 2KMI or 2,4,6/3,5-pentahydroxycyclohexanone) to 3D-(3,5/4)-trihydroxycyclohexane-1,2-dione (D-2,3-diketo-4-deoxy-epi-inositol). The polypeptide is Inosose dehydratase (Clostridium botulinum (strain Alaska E43 / Type E3)).